Here is a 700-residue protein sequence, read N- to C-terminus: Calpain-2 catalytic subunit (700 aa).

A propeptide spans Ala-2–Gly-19 (anchors to the small subunit). The region spanning Leu-45–Thr-344 is the Calpain catalytic domain. Residues Gly-91 and Asp-96 each coordinate Ca(2+). Residue Cys-105 is part of the active site. Ca(2+) contacts are provided by Glu-175, Gln-229, and Lys-230. Active-site residues include His-262 and Asn-286. Ca(2+) contacts are provided by Glu-292, Asp-299, and Glu-323. A domain III region spans residues Pro-345–Asp-514. A linker region spans residues Glu-515–Asp-529. The segment at Ile-530–Ile-700 is domain IV. Ca(2+)-binding residues include Ala-542, Asp-545, Glu-547, Glu-552, Asp-585, Asp-587, Ser-589, Lys-591, Glu-596, Asp-615, Asp-617, Ser-619, Thr-621, Glu-626, Asp-658, and Asn-661. EF-hand domains are found at residues Phe-572–Gln-605 and Thr-602–Lys-637. The region spanning Ile-667–Ile-700 is the EF-hand 3 domain.

It belongs to the peptidase C2 family. As to quaternary structure, forms a heterodimer with a small (regulatory) subunit (CAPNS1). Ca(2+) serves as cofactor. In terms of tissue distribution, ubiquitous.

The protein resides in the cytoplasm. The protein localises to the cell membrane. It catalyses the reaction Broad endopeptidase specificity.. Activated by 200-1000 micromolar concentrations of calcium and inhibited by calpastatin. Calcium-regulated non-lysosomal thiol-protease which catalyze limited proteolysis of substrates involved in cytoskeletal remodeling and signal transduction. This is Calpain-2 catalytic subunit (CAPN2) from Gallus gallus (Chicken).